Consider the following 250-residue polypeptide: 1-(5-phosphoribosyl)-5-[(5-phosphoribosylamino)methylideneamino] imidazole-4-carboxamide isomerase (250 aa).

The active-site Proton acceptor is the Asp-8. Asp-129 (proton donor) is an active-site residue.

It belongs to the HisA/HisF family.

It localises to the cytoplasm. It catalyses the reaction 1-(5-phospho-beta-D-ribosyl)-5-[(5-phospho-beta-D-ribosylamino)methylideneamino]imidazole-4-carboxamide = 5-[(5-phospho-1-deoxy-D-ribulos-1-ylimino)methylamino]-1-(5-phospho-beta-D-ribosyl)imidazole-4-carboxamide. It participates in amino-acid biosynthesis; L-histidine biosynthesis; L-histidine from 5-phospho-alpha-D-ribose 1-diphosphate: step 4/9. The sequence is that of 1-(5-phosphoribosyl)-5-[(5-phosphoribosylamino)methylideneamino] imidazole-4-carboxamide isomerase from Desulfovibrio desulfuricans (strain ATCC 27774 / DSM 6949 / MB).